Here is a 67-residue protein sequence, read N- to C-terminus: Small ribosomal subunit protein eS17 (67 aa).

This sequence belongs to the eukaryotic ribosomal protein eS17 family. As to quaternary structure, part of the 30S ribosomal subunit.

The polypeptide is Small ribosomal subunit protein eS17 (Thermococcus kodakarensis (strain ATCC BAA-918 / JCM 12380 / KOD1) (Pyrococcus kodakaraensis (strain KOD1))).